The following is a 908-amino-acid chain: MADKTVKELADMVSKTASAVQQQLVDAGLPARAEGDLVTELEQEKLVTYLKQSHGQEEKRRISLKSKTTSTARVTGSSGKSKSVNVEVRKKKVFEKPDPEKMAEELAAREQAMIESQARAAKDAEDRAATKKKSEERQAATLAAMRASLGSSKKSDDKNDDISTSVVVKKGGKTTIEVKPKDQPKKKVTATKPKVETAVERKAREVREKEEARLREIETETRRTQAEEAQKRTLEQMRKMAGQYTDQPATEVRKDEPLAEGLVGDALEESFEKERREIKRGTSTTSARGRGRRKNQDEREIKNRKNGLRSSQSSQHKFEKPVEKIVYDVEISEQITVSDLAQRMAVKAREVTKLLMKMGEIARESDMIDQATASLIVEEMGHNPVPVSDTKVEDDLQDAVDERSSNVQTRPPVVTIMGHVDHGKTSLLDKIRETKVATGEAGGITQHIGAYHVKTARGVITFLDTPGHAAFSAMRSRGAQATDIVVLVVAADDGMMPQTEEAIDHARAAGTPLIVAINKMDKPSADPDRVLNELTAKEVVSEDWGGDTPMARISAKTGDGIDELLELISLQAELMELEAPLDGPAQGVVIESRLEKGRGPVVSVLVKKGTLKQGDLVLAGEYYGKVRAMTDEHGKRIQSAGPSIPVEILGLPETPAAGSEFLVLTDEKKAREVADFRTNRERERQLERQNAMRLESMFDQMEQGNVSYLNIVLKTDVRGSLEALLAALNELSTDEVKVRVISSGVGPISESDVTLAESSEAVLLGFNVRADATARRKSDSANMDIRYYSVIYGLIDDVKAAMSGMLAPEHREKILGVADVREVFRSSKFGAAAGCMVVEGTIYRNKPIRVLRNDQVIFTGQLQSLRRYKEDVNEVRTGMECGLAVRGYDVEAGDKIEVFEIQEFARTI.

Residues 52-318 (QSHGQEEKRR…RSSQSSQHKF (267 aa)) form a disordered region. The segment covering 65–84 (KSKTTSTARVTGSSGKSKSV) has biased composition (polar residues). 6 stretches are compositionally biased toward basic and acidic residues: residues 94 to 108 (FEKP…ELAA), 120 to 138 (AAKD…EERQ), 176 to 185 (IEVKPKDQPK), 193 to 238 (PKVE…EQMR), 270 to 280 (SFEKERREIKR), and 294 to 303 (KNQDEREIKN). A tr-type G domain is found at 409–578 (TRPPVVTIMG…SLQAELMELE (170 aa)). The segment at 418-425 (GHVDHGKT) is G1. Position 418–425 (418–425 (GHVDHGKT)) interacts with GTP. The interval 443–447 (GITQH) is G2. The interval 464-467 (DTPG) is G3. GTP-binding positions include 464 to 468 (DTPGH) and 518 to 521 (NKMD). Positions 518–521 (NKMD) are G4. Residues 554–556 (SAK) form a G5 region.

This sequence belongs to the TRAFAC class translation factor GTPase superfamily. Classic translation factor GTPase family. IF-2 subfamily.

It is found in the cytoplasm. One of the essential components for the initiation of protein synthesis. Protects formylmethionyl-tRNA from spontaneous hydrolysis and promotes its binding to the 30S ribosomal subunits. Also involved in the hydrolysis of GTP during the formation of the 70S ribosomal complex. In Psychrobacter cryohalolentis (strain ATCC BAA-1226 / DSM 17306 / VKM B-2378 / K5), this protein is Translation initiation factor IF-2.